The following is a 351-amino-acid chain: UDP-N-acetylglucosamine transporter slc35b4 (351 aa).

A run of 10 helical transmembrane segments spans residues 6 to 26 (LISL…VISL), 37 to 57 (AILV…FVNI), 77 to 97 (IPLK…VLNN), 104 to 124 (IPIP…IVIG), 136 to 156 (QILS…SSMP), 173 to 193 (FSIG…LGLI), 209 to 229 (TIFY…DDIL), 252 to 274 (TLWV…VFIL), 282 to 302 (TCTL…VIYF), and 306 to 326 (FTSL…MYST).

The protein belongs to the nucleotide-sugar transporter family. SLC35B subfamily.

It localises to the golgi apparatus membrane. Its function is as follows. Sugar transporter that specifically mediates the transport of UDP-N-acetylglucosamine (UDP-GlcNAc) from cytosol into Golgi. This is UDP-N-acetylglucosamine transporter slc35b4 (slc35b4) from Dictyostelium discoideum (Social amoeba).